Reading from the N-terminus, the 501-residue chain is Group 3 secretory phospholipase A2 (501 aa).

The signal sequence occupies residues 1–19; that stretch reads MGVLVVLLGVLSFLGRTLG. The disordered stretch occupies residues 119-139; sequence RGPAESPAGTREKRAAGQNGV. The segment at 150-291 is phospholipase A2-like; the sequence is GWTVPGTLWC…SWSSPATSLT (142 aa). Residues Trp158, Gly160, and Gly162 each coordinate Ca(2+). 4 disulfides stabilise this stretch: Cys159/Cys181, Cys180/Cys220, Cys187/Cys213, and Cys211/Cys244. The N-linked (GlcNAc...) asparagine glycan is linked to Asn167. Residue His184 is part of the active site. Asp185 contributes to the Ca(2+) binding site. Asp214 is a catalytic residue. An N-linked (GlcNAc...) asparagine glycan is attached at Asn280. A compositionally biased stretch (polar residues) spans 284-298; it reads SSPATSLTPSPQNPA. The segment at 284 to 339 is disordered; it reads SSPATSLTPSPQNPALSRPQPMQHPQQWPSEWKESKSPSKTNATALQAPVASPGSD. N-linked (GlcNAc...) asparagine glycans are attached at residues Asn325 and Asn403.

The protein belongs to the phospholipase A2 family. Ca(2+) serves as cofactor. Post-translationally, N-glycosylation does not affect the catalytic activity, but is required for proper secretion. A nonglycosylated form was observed in several cell types. In several cell types, the N- and C-termini are cleaved off.

Its subcellular location is the secreted. The protein localises to the cell membrane. It is found in the cytoplasm. It localises to the cytoskeleton. The protein resides in the microtubule organizing center. Its subcellular location is the centrosome. The protein localises to the centriole. It is found in the recycling endosome. The catalysed reaction is a 1,2-diacyl-sn-glycero-3-phosphocholine + H2O = a 1-acyl-sn-glycero-3-phosphocholine + a fatty acid + H(+). It carries out the reaction 1-hexadecanoyl-2-(9Z,12Z-octadecadienoyl)-sn-glycero-3-phosphocholine + H2O = (9Z,12Z)-octadecadienoate + 1-hexadecanoyl-sn-glycero-3-phosphocholine + H(+). The enzyme catalyses 1-hexadecanoyl-2-(5Z,8Z,11Z,14Z-eicosatetraenoyl)-sn-glycero-3-phosphocholine + H2O = 1-hexadecanoyl-sn-glycero-3-phosphocholine + (5Z,8Z,11Z,14Z)-eicosatetraenoate + H(+). It catalyses the reaction 1-hexadecanoyl-2-(9Z,12Z-octadecadienoyl)-sn-glycero-3-phosphoethanolamine + H2O = 1-hexadecanoyl-sn-glycero-3-phosphoethanolamine + (9Z,12Z)-octadecadienoate + H(+). The catalysed reaction is 1-hexadecanoyl-2-(5Z,8Z,11Z,14Z-eicosatetraenoyl)-sn-glycero-3-phosphoethanolamine + H2O = 1-hexadecanoyl-sn-glycero-3-phosphoethanolamine + (5Z,8Z,11Z,14Z)-eicosatetraenoate + H(+). Secretory calcium-dependent phospholipase A2 that primarily targets extracellular phospholipids. Hydrolyzes the ester bond of the fatty acyl group attached at sn-2 position of phospholipids without apparent head group selectivity. Contributes to phospholipid remodeling of low-density lipoprotein (LDL) and high-density lipoprotein (HDL) particles. Hydrolyzes LDL phospholipids releasing unsaturated fatty acids that regulate macrophage differentiation toward foam cells. May act in an autocrine and paracrine manner. Secreted by immature mast cells, acts on nearby fibroblasts upstream to PTDGS to synthesize prostaglandin D2 (PGD2), which in turn promotes mast cell maturation and degranulation via PTGDR. Secreted by epididymal epithelium, acts on immature sperm cells within the duct, modulating the degree of unsaturation of the fatty acyl components of phosphatidylcholines required for acrosome assembly and sperm cell motility. Facilitates the replacement of fatty acyl chains in phosphatidylcholines in sperm membranes from omega-6 and omega-9 to omega-3 polyunsaturated fatty acids (PUFAs). Coupled to lipoxygenase pathway, may process omega-6 PUFAs to generate oxygenated lipid mediators in the male reproductive tract. At pericentrosomal preciliary compartment, negatively regulates ciliogenesis likely by regulating endocytotic recycling of ciliary membrane protein. Coupled to cyclooxygenase pathway provides arachidonate to generate prostaglandin E2 (PGE2), a potent immunomodulatory lipid in inflammation and tumorigenesis. At colonic epithelial barrier, preferentially hydrolyzes phospholipids having arachidonate and docosahexaenoate at sn-2 position, contributing to the generation of oxygenated metabolites involved in colonic stem cell homeostasis. Releases C16:0 and C18:0 lysophosphatidylcholine subclasses from neuron plasma membranes and promotes neurite outgrowth and neuron survival. The polypeptide is Group 3 secretory phospholipase A2 (PLA2G3) (Bos taurus (Bovine)).